A 400-amino-acid polypeptide reads, in one-letter code: Serine/threonine transporter SstT (400 aa).

The next 10 helical transmembrane spans lie at 11 to 31, 45 to 65, 81 to 101, 138 to 158, 175 to 195, 213 to 233, 242 to 264, 295 to 315, 327 to 347, and 354 to 374; these read IGLV…GWLA, FVGA…MAAI, IMYM…SFLF, AIAE…GFAL, AISQ…LGLV, ILMV…PLII, YPLV…SSAA, MAGA…TLGI, LVAT…LLLI, and FSIP…IGVI.

The protein belongs to the dicarboxylate/amino acid:cation symporter (DAACS) (TC 2.A.23) family.

It is found in the cell inner membrane. It carries out the reaction L-serine(in) + Na(+)(in) = L-serine(out) + Na(+)(out). The catalysed reaction is L-threonine(in) + Na(+)(in) = L-threonine(out) + Na(+)(out). Its function is as follows. Involved in the import of serine and threonine into the cell, with the concomitant import of sodium (symport system). This chain is Serine/threonine transporter SstT, found in Psychrobacter cryohalolentis (strain ATCC BAA-1226 / DSM 17306 / VKM B-2378 / K5).